A 124-amino-acid chain; its full sequence is Fluoride-specific ion channel FluC (124 aa).

The next 4 membrane-spanning stretches (helical) occupy residues 1–21, 38–58, 69–89, and 97–117; these read MIPLILAVSAGGVAGTLLRFA, TLAVNIVGCLLIGVLYGLFLV, GLIVGFLGGLTTFSSFSLDTV, and VALALGYAALSVFGGLLATWA. Positions 76 and 79 each coordinate Na(+).

It belongs to the fluoride channel Fluc/FEX (TC 1.A.43) family.

It localises to the cell inner membrane. The enzyme catalyses fluoride(in) = fluoride(out). Na(+) is not transported, but it plays an essential structural role and its presence is essential for fluoride channel function. Functionally, fluoride-specific ion channel. Important for reducing fluoride concentration in the cell, thus reducing its toxicity. The protein is Fluoride-specific ion channel FluC of Pseudomonas fluorescens (strain ATCC BAA-477 / NRRL B-23932 / Pf-5).